Consider the following 163-residue polypeptide: Sorting nexin-3 (163 aa).

The region spanning 39–162 is the PX domain; the sequence is VEVRDPRTHF…VRFLQDEVFN (124 aa). Arginine 82, serine 84, lysine 113, arginine 119, and arginine 128 together coordinate a 1,2-diacyl-sn-glycero-3-phospho-(1D-myo-inositol-3-phosphate).

The protein belongs to the sorting nexin family.

The protein localises to the cytoplasm. It localises to the golgi apparatus membrane. The protein resides in the prevacuolar compartment membrane. Functionally, required for retention of late Golgi membrane proteins. Component of the retrieval machinery that functions by direct interaction with the cytosolic tails of certain TGN membrane proteins during the sorting/budding process at the prevacuolar compartment. Binds phosphatidylinositol 3-phosphate (PtdIns(P3)). The sequence is that of Sorting nexin-3 (SNX3) from Eremothecium gossypii (strain ATCC 10895 / CBS 109.51 / FGSC 9923 / NRRL Y-1056) (Yeast).